The chain runs to 543 residues: Carboxypeptidase Y homolog A (543 aa).

The signal sequence occupies residues 1-17 (MKLLTTGLLASAALVAA). Positions 18 to 124 (QEQQVLRADE…KLKNYDLRVK (107 aa)) are excised as a propeptide. 5 cysteine pairs are disulfide-bonded: C179/C419, C313/C327, C337/C360, C344/C353, and C382/C389. N210 carries an N-linked (GlcNAc...) asparagine glycan. S266 is a catalytic residue. The active site involves D458. N509 carries N-linked (GlcNAc...) asparagine glycosylation. H520 is an active-site residue.

Belongs to the peptidase S10 family.

The protein localises to the vacuole. It carries out the reaction Release of a C-terminal amino acid with broad specificity.. In terms of biological role, vacuolar carboxypeptidase involved in degradation of small peptides. Digests preferentially peptides containing an aliphatic or hydrophobic residue in P1' position, as well as methionine, leucine or phenylalanine in P1 position of ester substrate. The protein is Carboxypeptidase Y homolog A (CPYA) of Arthroderma gypseum (strain ATCC MYA-4604 / CBS 118893) (Microsporum gypseum).